A 62-amino-acid chain; its full sequence is Large ribosomal subunit protein eL24 (62 aa).

Cysteine 7, cysteine 10, cysteine 33, and cysteine 37 together coordinate Zn(2+). A C4-type zinc finger spans residues 7–37 (CDYCGDDIEPGTGTMFVHNDGSTVHFCSAKC).

It belongs to the eukaryotic ribosomal protein eL24 family. In terms of assembly, part of the 50S ribosomal subunit. Forms a cluster with proteins L3 and L14. The cofactor is Zn(2+).

Its function is as follows. Binds to the 23S rRNA. The protein is Large ribosomal subunit protein eL24 of Halobacterium salinarum (strain ATCC 29341 / DSM 671 / R1).